A 96-amino-acid polypeptide reads, in one-letter code: Large ribosomal subunit protein uL23 (96 aa).

Belongs to the universal ribosomal protein uL23 family. As to quaternary structure, part of the 50S ribosomal subunit. Contacts protein L29, and trigger factor when it is bound to the ribosome.

In terms of biological role, one of the early assembly proteins it binds 23S rRNA. One of the proteins that surrounds the polypeptide exit tunnel on the outside of the ribosome. Forms the main docking site for trigger factor binding to the ribosome. This chain is Large ribosomal subunit protein uL23, found in Desulfovibrio desulfuricans (strain ATCC 27774 / DSM 6949 / MB).